The sequence spans 194 residues: Thymidylate kinase (194 aa).

7 to 14 (GIDTAGKS) lines the ATP pocket.

The protein belongs to the thymidylate kinase family.

The catalysed reaction is dTMP + ATP = dTDP + ADP. Its function is as follows. Phosphorylation of dTMP to form dTDP in both de novo and salvage pathways of dTTP synthesis. This is Thymidylate kinase from Nautilia profundicola (strain ATCC BAA-1463 / DSM 18972 / AmH).